We begin with the raw amino-acid sequence, 741 residues long: Cysteine--tRNA ligase, cytoplasmic (741 aa).

Position 46 (Cys46) interacts with Zn(2+). A 'HIGH' region motif is present at residues 48–58 (PTVYDASHMGH). At Ser297 the chain carries Phosphoserine. 3 residues coordinate Zn(2+): Cys340, His365, and Glu369. The short motif at 398 to 402 (KMSKS) is the 'KMSKS' region element. Lys401 is a binding site for ATP.

It belongs to the class-I aminoacyl-tRNA synthetase family. The cofactor is Zn(2+).

It localises to the cytoplasm. It catalyses the reaction tRNA(Cys) + L-cysteine + ATP = L-cysteinyl-tRNA(Cys) + AMP + diphosphate. In Drosophila pseudoobscura pseudoobscura (Fruit fly), this protein is Cysteine--tRNA ligase, cytoplasmic (Aats-cys).